Here is a 370-residue protein sequence, read N- to C-terminus: tRNA 2-selenouridine synthase (370 aa).

Residues 12-136 (FLDDVPMMDM…MRTFLLETTQ (125 aa)) enclose the Rhodanese domain. C95 (S-selanylcysteine intermediate) is an active-site residue.

This sequence belongs to the SelU family. In terms of assembly, monomer.

The enzyme catalyses 5-methylaminomethyl-2-thiouridine(34) in tRNA + selenophosphate + (2E)-geranyl diphosphate + H2O + H(+) = 5-methylaminomethyl-2-selenouridine(34) in tRNA + (2E)-thiogeraniol + phosphate + diphosphate. It carries out the reaction 5-methylaminomethyl-2-thiouridine(34) in tRNA + (2E)-geranyl diphosphate = 5-methylaminomethyl-S-(2E)-geranyl-thiouridine(34) in tRNA + diphosphate. It catalyses the reaction 5-methylaminomethyl-S-(2E)-geranyl-thiouridine(34) in tRNA + selenophosphate + H(+) = 5-methylaminomethyl-2-(Se-phospho)selenouridine(34) in tRNA + (2E)-thiogeraniol. The catalysed reaction is 5-methylaminomethyl-2-(Se-phospho)selenouridine(34) in tRNA + H2O = 5-methylaminomethyl-2-selenouridine(34) in tRNA + phosphate. In terms of biological role, involved in the post-transcriptional modification of the uridine at the wobble position (U34) of tRNA(Lys), tRNA(Glu) and tRNA(Gln). Catalyzes the conversion of 2-thiouridine (S2U-RNA) to 2-selenouridine (Se2U-RNA). Acts in a two-step process involving geranylation of 2-thiouridine (S2U) to S-geranyl-2-thiouridine (geS2U) and subsequent selenation of the latter derivative to 2-selenouridine (Se2U) in the tRNA chain. The sequence is that of tRNA 2-selenouridine synthase from Pseudomonas putida (strain ATCC 47054 / DSM 6125 / CFBP 8728 / NCIMB 11950 / KT2440).